A 511-amino-acid polypeptide reads, in one-letter code: MSGGFELQPRDGGPRVALAPGETVIGRGPLLGITDKRVSRRHAILEVAGGQLRIKPIHTNPCFYQSSEKSQLLPLKPNLWCYLNPGDSFSLLVDKYIFRILSIPSEVEMQCTLRNSQVLDEDNILNETPKSPVINLPHETTGASQLEGSTEIAKTQMTPTNSVSFLGENRDCNKQQPILAERKRILPTWMLAEHLSDQNLSVPAISGGNVIQGSGKEEICKDKSQLNTTQQGRRQLISSGSSENTSAEQDTGEECKNTDQEESTISSKEMPQSFSAITLSNTEMNNIKTNAQRNKLPIEELGKVSKHKIATKRTPHKEDEAMSCSENCSSAQGDSLQDESQGSHSESSSNPSNPETLHAKATDSVLQGSEGNKVKRTSCMYGANCYRKNPVHFQHFSHPGDSDYGGVQIVGQDETDDRPECPYGPSCYRKNPQHKIEYRHNTLPVRNVLDEDNDNVGQPNEYDLNDSFLDDEEEDYEPTDEDSDWEPGKEDEEKEDVEELLKEAKRFMKRK.

The FHA-like domain maps to 1–108 (MSGGFELQPR…RILSIPSEVE (108 aa)). Residue serine 116 is modified to Phosphoserine; by ATM. At serine 149 the chain carries Phosphoserine. A KBM motif is present at residues 182–191 (RKRILPTWML). A disordered region spans residues 223-370 (KSQLNTTQQG…ATDSVLQGSE (148 aa)). 2 stretches are compositionally biased toward polar residues: residues 225–249 (QLNTTQQGRRQLISSGSSENTSAEQ) and 263–293 (STISSKEMPQSFSAITLSNTEMNNIKTNAQR). Basic residues predominate over residues 304-315 (VSKHKIATKRTP). The segment covering 324–344 (CSENCSSAQGDSLQDESQGSH) has biased composition (polar residues). The span at 345-355 (SESSSNPSNPE) shows a compositional bias: low complexity. Positions 376, 381, 386, and 387 each coordinate a glycoprotein. The PBZ-type 1 zinc-finger motif lies at 377–398 (TSCMYGANCYRKNPVHFQHFSH). Residues 406-416 (GVQIVGQDETD) form a flexible linker region. The PBZ-type 2 zinc finger occupies 419-440 (PECPYGPSCYRKNPQHKIEYRH). The a glycoprotein site is built by tyrosine 423, tyrosine 428, and arginine 429. The disordered stretch occupies residues 449–497 (LDEDNDNVGQPNEYDLNDSFLDDEEEDYEPTDEDSDWEPGKEDEEKEDV). Positions 468 to 497 (FLDDEEEDYEPTDEDSDWEPGKEDEEKEDV) are enriched in acidic residues. Residues 476 to 500 (YEPTDEDSDWEPGKEDEEKEDVEEL) carry the NAP1L motif motif. Residues 487–511 (PGKEDEEKEDVEELLKEAKRFMKRK) are a coiled coil.

This sequence belongs to the APLF family. In terms of assembly, interacts with LIG4. Interacts with PARP1. Interacts with XRCC4. Interacts (via KBM motif) with XRCC5 and XRCC6; promoting recruitment to DNA damage sites. Interacts with XRCC1. Interacts (via C-terminal disordered region) with histones; interacts with histone H2A, H2B and H3-H4. Post-translationally, poly-ADP-ribosylated. In addition to binding non covalently poly-ADP-ribose via its PBZ-type zinc fingers, the protein is also covalently poly-ADP-ribosylated by PARP1. In terms of processing, phosphorylated in an ATM-dependent manner upon double-strand DNA break.

It localises to the nucleus. Its subcellular location is the chromosome. The protein resides in the cytoplasm. The protein localises to the cytosol. In terms of biological role, histone chaperone involved in single-strand and double-strand DNA break repair. Recruited to sites of DNA damage through interaction with branched poly-ADP-ribose chains, a polymeric post-translational modification synthesized transiently at sites of chromosomal damage to accelerate DNA strand break repair reactions. Following recruitment to DNA damage sites, acts as a histone chaperone that mediates histone eviction during DNA repair and promotes recruitment of histone variant MACROH2A1. Also has a nuclease activity: displays apurinic-apyrimidinic (AP) endonuclease and 3'-5' exonuclease activities in vitro. Also able to introduce nicks at hydroxyuracil and other types of pyrimidine base damage. Together with PARP3, promotes the retention of the LIG4-XRCC4 complex on chromatin and accelerate DNA ligation during non-homologous end-joining (NHEJ). Also acts as a negative regulator of cell pluripotency by promoting histone exchange. Required for the embryo implantation during the epithelial to mesenchymal transition in females. The polypeptide is Aprataxin and PNK-like factor (Homo sapiens (Human)).